A 491-amino-acid chain; its full sequence is MANYFNTLNLRQQLDQLGRCRFMDRNEFANEADYLKGKKIVIVGCGAQGLNQGLNMRDSGLDISYALRAEAIAEKRASFQRATENGFKVGTYDELIPSADLVVNLTPDKQHSKVVADVMPLMKQGAALGYSHGLNIVEVGEQIRKDITVVMVAPKCPGTEVREEYKRGFGVPTLIAVHPENDPNGDGLEIAKAWAAATGGHRAGVLESSFVAEVKSDLMGEQTILCGMLQAGSIVCYDKLVADGKDPAYAGKLIQYGWETITEALKQGGITLMMDRLSNSAKLRAFELSEQIKAKLTFLFEKHMDDIISGEFSATMMADWANGDANLLKWREETGKTAFENAPKYEGKISEQEYFDHGVLMVAMVKAGVELAFDTMVASGIYEESAYYESLHELPLIANTIARKRLYEMNVVISDTAEYGNYLFANVATPILAKEIMPTLQKGDLGEPTPTVEIDNITLRDVNDAIRNHPIELIGQELRGYMTDMKRISSH.

One can recognise a KARI N-terminal Rossmann domain in the interval 14–208 (LDQLGRCRFM…GGHRAGVLES (195 aa)). Residues 45–48 (CGAQ), Arg-68, Arg-76, Ser-78, and 108–110 (DKQ) each bind NADP(+). Residue His-132 is part of the active site. Gly-158 is a binding site for NADP(+). 2 KARI C-terminal knotted domains span residues 209–344 (SFVA…NAPK) and 345–485 (YEGK…MTDM). Residues Asp-217, Glu-221, Glu-389, and Glu-393 each contribute to the Mg(2+) site. Substrate is bound at residue Ser-414.

Belongs to the ketol-acid reductoisomerase family. Requires Mg(2+) as cofactor.

It carries out the reaction (2R)-2,3-dihydroxy-3-methylbutanoate + NADP(+) = (2S)-2-acetolactate + NADPH + H(+). It catalyses the reaction (2R,3R)-2,3-dihydroxy-3-methylpentanoate + NADP(+) = (S)-2-ethyl-2-hydroxy-3-oxobutanoate + NADPH + H(+). It functions in the pathway amino-acid biosynthesis; L-isoleucine biosynthesis; L-isoleucine from 2-oxobutanoate: step 2/4. Its pathway is amino-acid biosynthesis; L-valine biosynthesis; L-valine from pyruvate: step 2/4. Its function is as follows. Involved in the biosynthesis of branched-chain amino acids (BCAA). Catalyzes an alkyl-migration followed by a ketol-acid reduction of (S)-2-acetolactate (S2AL) to yield (R)-2,3-dihydroxy-isovalerate. In the isomerase reaction, S2AL is rearranged via a Mg-dependent methyl migration to produce 3-hydroxy-3-methyl-2-ketobutyrate (HMKB). In the reductase reaction, this 2-ketoacid undergoes a metal-dependent reduction by NADPH to yield (R)-2,3-dihydroxy-isovalerate. This is Ketol-acid reductoisomerase (NADP(+)) from Pasteurella multocida (strain Pm70).